Reading from the N-terminus, the 284-residue chain is Deoxyribonuclease-1 (284 aa).

An N-terminal signal peptide occupies residues 1 to 22 (MRAARLMGALLALAGLLQLALS). The N-linked (GlcNAc...) asparagine glycan is linked to Asn-40. Residue Glu-100 is part of the active site. Cys-123 and Cys-126 form a disulfide bridge. Asn-128 carries an N-linked (GlcNAc...) asparagine glycan. His-156 is a catalytic residue. Cys-195 and Cys-231 are joined by a disulfide.

This sequence belongs to the DNase I family. The cofactor is Ca(2+). Mg(2+) is required as a cofactor.

Its subcellular location is the secreted. The protein localises to the zymogen granule. It is found in the nucleus envelope. The catalysed reaction is Endonucleolytic cleavage to 5'-phosphodinucleotide and 5'-phosphooligonucleotide end-products.. In terms of biological role, serum endocuclease secreted into body fluids by a wide variety of exocrine and endocrine organs. Expressed by non-hematopoietic tissues and preferentially cleaves protein-free DNA. Among other functions, seems to be involved in cell death by apoptosis. Binds specifically to G-actin and blocks actin polymerization. Together with DNASE1L3, plays a key role in degrading neutrophil extracellular traps (NETs). NETs are mainly composed of DNA fibers and are released by neutrophils to bind pathogens during inflammation. Degradation of intravascular NETs by DNASE1 and DNASE1L3 is required to prevent formation of clots that obstruct blood vessels and cause organ damage following inflammation. This chain is Deoxyribonuclease-1 (DNASE1), found in Sus scrofa (Pig).